The sequence spans 644 residues: MFQDNPLLAQLKQQLHSQTPRAEGVVKATEKGFGFLEVDAQKSYFIPPPQMKKVMHGDRIIAVIHSEKERESAEPEELVEPFLTRFVGKVQGKNDRLAIVPDHPLLKDAIPCRAARGLNHEFKEGDWAVAEMRRHPLKGDRSFYAELTQYITFGDDHFVPWWVTLARHNLEKEAPDGVATEMLDEGLVREDLTALDFVTIDSASTEDMDDALFAKALPDDKLQLIVAIADPTAWIAEGSKLDKAAKIRAFTNYLPGFNIPMLPRELSDDLCSLRANEVRPVLACRMTLSADGTIEDNIEFFAATIESKAKLVYDQVSDWLENTGDWKPESEAIAEQVRLLAQICQRRGEWRHNHALVFKDRPDYRFILGEKGEVLDIVAEPRRIANRIVEEAMIAANICAARVLRDKLGFGIYNVHMGFDPANADALAALLKTHGLHVDAEEVLTLDGFCKLRRELDAQPTGFLDSRIRRFQSFAEISTEPGPHFGLGLEAYATWTSPIRKYGDMINHRLLKAVIKGETATRPQDEITVQMAERRRLNRMAERDVGDWLYARFLKDKAGTDTRFAAEIVDISRGGMRVRLVDNGAIAFIPAPFLHAVRDEMVCSQENGTVQIKGETVYKVTDVIDVTIAEVRMETRSIIARPVA.

In terms of domain architecture, RNB spans 189 to 516; that stretch reads REDLTALDFV…NHRLLKAVIK (328 aa). The S1 motif domain occupies 561 to 643; that stretch reads DTRFAAEIVD…ETRSIIARPV (83 aa).

It belongs to the RNR ribonuclease family. RNase II subfamily.

The protein resides in the cytoplasm. It catalyses the reaction Exonucleolytic cleavage in the 3'- to 5'-direction to yield nucleoside 5'-phosphates.. Involved in mRNA degradation. Hydrolyzes single-stranded polyribonucleotides processively in the 3' to 5' direction. In Escherichia coli (strain ATCC 8739 / DSM 1576 / NBRC 3972 / NCIMB 8545 / WDCM 00012 / Crooks), this protein is Exoribonuclease 2.